Reading from the N-terminus, the 856-residue chain is V-type proton ATPase subunit a (856 aa).

Residues 1–409 (MAPKQDTPFR…NAYGTATYQE (409 aa)) lie on the Cytoplasmic side of the membrane. The chain crosses the membrane as a helical span at residues 410–428 (VNPAIPVIVTFPFLFAVMF). Topologically, residues 429-430 (GD) are vacuolar. The chain crosses the membrane as a helical span at residues 431–447 (FGHALIMLCAALAMIYW). Topologically, residues 448–460 (EKPLKKVTFELFA) are cytoplasmic. A helical membrane pass occupies residues 461-490 (MVFYGRYIVLVMAVFSVYTGLIYNDVFSKS). The Vacuolar portion of the chain corresponds to 491-544 (MTLFDSQWKWVVPENFKEGMTVKAVLREPNGYRYPFGLDWRWHGTENELLFINS). The helical transmembrane segment at 545 to 564 (YKMKMAIILGWAHMTYSLCF) threads the bilayer. Topologically, residues 565–582 (SYINARHFKRPIDIWGNF) are cytoplasmic. Residues 583-603 (VPGMIFFQSIFGYLVLCIIYK) traverse the membrane as a helical segment. Topologically, residues 604 to 648 (WSVDWFGTGRQPPGLLNMLIYMFLQPGTLDGGVELYPGQATVQVI) are vacuolar. Residues 649–668 (LLLLAVIQVPILLFLKPFYL) traverse the membrane as a helical segment. The Cytoplasmic segment spans residues 669-738 (RWENNRARAK…EVMIHQVIHT (70 aa)). The disordered stretch occupies residues 689 to 710 (VSALDEDDEEDPSNGDDYEGAA). The span at 692–707 (LDEDDEEDPSNGDDYE) shows a compositional bias: acidic residues. A helical transmembrane segment spans residues 739-763 (IEFCLNSVSHTASYLRLWALSLAHQ). The Vacuolar segment spans residues 764-784 (QLSAVLWSMTMAKALESKGLG). A helical transmembrane segment spans residues 785–823 (GAIFLVVAFAMFFVLSVIILIIMEGVSAMLHSLRLAWVE). At 824-856 (SFSKFAEFGGWPFTPFSFKQQLEESEELKEYIG) the chain is on the cytoplasmic side.

Belongs to the V-ATPase 116 kDa subunit family. In terms of assembly, V-ATPase is a heteromultimeric enzyme composed of a peripheral catalytic V1 complex (components A to H) attached to an integral membrane V0 proton pore complex (components: a, c, c', c'', d, e, f and VOA1).

The protein resides in the vacuole membrane. Subunit of the V0 complex of vacuolar(H+)-ATPase (V-ATPase), a multisubunit enzyme composed of a peripheral complex (V1) that hydrolyzes ATP and a membrane integral complex (V0) that translocates protons. V-ATPase is responsible for acidifying and maintaining the pH of intracellular compartments. This Neurospora crassa (strain ATCC 24698 / 74-OR23-1A / CBS 708.71 / DSM 1257 / FGSC 987) protein is V-type proton ATPase subunit a (vph-1).